A 306-amino-acid polypeptide reads, in one-letter code: Protein YIPF1 (306 aa).

The Cytoplasmic segment spans residues methionine 1–aspartate 119. Residues proline 33–asparagine 59 are disordered. Acidic residues predominate over residues glutamate 50–asparagine 59. The chain crosses the membrane as a helical span at residues leucine 120 to leucine 140. Residues serine 141–serine 162 lie on the Lumenal side of the membrane. Residues isoleucine 163–leucine 183 traverse the membrane as a helical segment. Over leucine 184–glutamate 200 the chain is Cytoplasmic. A helical membrane pass occupies residues isoleucine 201–isoleucine 221. The Lumenal portion of the chain corresponds to proline 222–arginine 227. A helical membrane pass occupies residues tryptophan 228 to proline 248. Over alanine 249–arginine 256 the chain is Cytoplasmic. Residues valine 257–leucine 277 traverse the membrane as a helical segment. Over alanine 278–serine 306 the chain is Lumenal. Asparagine 297 carries an N-linked (GlcNAc...) asparagine glycan.

Belongs to the YIP1 family. Interacts with YIPF6; this interaction may stabilize YIPF1. May also form a ternary complex with YIPF2 and YIPF6.

The protein resides in the golgi apparatus. It localises to the cis-Golgi network membrane. The protein localises to the trans-Golgi network membrane. Its subcellular location is the late endosome membrane. The protein is Protein YIPF1 (Yipf1) of Rattus norvegicus (Rat).